Consider the following 284-residue polypeptide: F-box protein PP2-B13 (284 aa).

Residues 1–44 (MMMLPEACVANILAFTSPADAFSSSEVSSVFRLAGDSDFVWEKF) form the F-box domain.

The polypeptide is F-box protein PP2-B13 (PP2B13) (Arabidopsis thaliana (Mouse-ear cress)).